We begin with the raw amino-acid sequence, 308 residues long: Atrochrysone carboxyl ACP thioesterase (308 aa).

Zn(2+)-binding residues include His-99, His-101, Asp-103, and His-104. The Proton donor/acceptor role is filled by Asp-103.

It belongs to the metallo-beta-lactamase superfamily. It depends on Zn(2+) as a cofactor.

It catalyses the reaction atrochrysone carboxyl-[ACP] + H2O = atrochrysone carboxylate + holo-[ACP] + H(+). The protein operates within secondary metabolite biosynthesis. Atrochrysone carboxyl ACP thioesterase; part of the gene cluster that mediates the biosynthesis of physcion, a natural anthraquinone fungicide that can prevent plant fungal infections. The pathway begins with the polyketide synthase AcPKS that condenses 8 malonyl-CoA units to synthesize atrochrysone thioester which is released from the synthase by the atrochrysone carboxyl ACP thioesterase AcTE that breaks the thioester bond and leads to free atrochrysone carboxylic acid. Spontaneous decarboxylation of atrochrysone carboxylic acid leads to the formation of atrochrysone. Then, atrochrysone undergoes spontaneous dehydration and oxidation, giving the products emodin anthrone and emodin. The O-methyltransferase AcOMT then methylates the C-6 hydroxyl of emodin to form physcion. The sequence is that of Atrochrysone carboxyl ACP thioesterase from Aspergillus chevalieri (Eurotium chevalieri).